Here is a 466-residue protein sequence, read N- to C-terminus: 3-isopropylmalate dehydratase large subunit (466 aa).

Positions 347, 407, and 410 each coordinate [4Fe-4S] cluster.

This sequence belongs to the aconitase/IPM isomerase family. LeuC type 1 subfamily. As to quaternary structure, heterodimer of LeuC and LeuD. [4Fe-4S] cluster is required as a cofactor.

The catalysed reaction is (2R,3S)-3-isopropylmalate = (2S)-2-isopropylmalate. The protein operates within amino-acid biosynthesis; L-leucine biosynthesis; L-leucine from 3-methyl-2-oxobutanoate: step 2/4. Catalyzes the isomerization between 2-isopropylmalate and 3-isopropylmalate, via the formation of 2-isopropylmaleate. This is 3-isopropylmalate dehydratase large subunit from Shewanella pealeana (strain ATCC 700345 / ANG-SQ1).